Here is a 356-residue protein sequence, read N- to C-terminus: Phosphoribosylformylglycinamidine cyclo-ligase (356 aa).

This sequence belongs to the AIR synthase family.

The protein resides in the cytoplasm. The enzyme catalyses 2-formamido-N(1)-(5-O-phospho-beta-D-ribosyl)acetamidine + ATP = 5-amino-1-(5-phospho-beta-D-ribosyl)imidazole + ADP + phosphate + H(+). The protein operates within purine metabolism; IMP biosynthesis via de novo pathway; 5-amino-1-(5-phospho-D-ribosyl)imidazole from N(2)-formyl-N(1)-(5-phospho-D-ribosyl)glycinamide: step 2/2. The protein is Phosphoribosylformylglycinamidine cyclo-ligase of Acinetobacter baylyi (strain ATCC 33305 / BD413 / ADP1).